Here is a 336-residue protein sequence, read N- to C-terminus: tRNA-modifying protein YgfZ (336 aa).

2 residues coordinate folate: Trp-28 and Trp-191.

This sequence belongs to the tRNA-modifying YgfZ family.

Its subcellular location is the cytoplasm. Its function is as follows. Folate-binding protein involved in regulating the level of ATP-DnaA and in the modification of some tRNAs. It is probably a key factor in regulatory networks that act via tRNA modification, such as initiation of chromosomal replication. This chain is tRNA-modifying protein YgfZ, found in Hamiltonella defensa subsp. Acyrthosiphon pisum (strain 5AT).